A 217-amino-acid chain; its full sequence is 3-demethoxyubiquinol 3-hydroxylase (217 aa).

Fe cation-binding residues include Glu66, Glu96, His99, Glu148, Glu180, and His183.

It belongs to the COQ7 family. Fe cation serves as cofactor.

It is found in the cell membrane. It catalyses the reaction a 5-methoxy-2-methyl-3-(all-trans-polyprenyl)benzene-1,4-diol + AH2 + O2 = a 3-demethylubiquinol + A + H2O. Its pathway is cofactor biosynthesis; ubiquinone biosynthesis. Functionally, catalyzes the hydroxylation of 2-nonaprenyl-3-methyl-6-methoxy-1,4-benzoquinol during ubiquinone biosynthesis. The sequence is that of 3-demethoxyubiquinol 3-hydroxylase from Xylella fastidiosa (strain 9a5c).